The primary structure comprises 78 residues: Small ribosomal subunit protein bS18 (78 aa).

This sequence belongs to the bacterial ribosomal protein bS18 family. As to quaternary structure, part of the 30S ribosomal subunit. Forms a tight heterodimer with protein bS6.

In terms of biological role, binds as a heterodimer with protein bS6 to the central domain of the 16S rRNA, where it helps stabilize the platform of the 30S subunit. This chain is Small ribosomal subunit protein bS18, found in Lactobacillus delbrueckii subsp. bulgaricus (strain ATCC BAA-365 / Lb-18).